The primary structure comprises 402 residues: CinA-like protein (402 aa).

It belongs to the CinA family.

The sequence is that of CinA-like protein from Fusobacterium nucleatum subsp. nucleatum (strain ATCC 25586 / DSM 15643 / BCRC 10681 / CIP 101130 / JCM 8532 / KCTC 2640 / LMG 13131 / VPI 4355).